We begin with the raw amino-acid sequence, 1611 residues long: SH3 domain-containing protein C23A1.17 (1611 aa).

Residues 3-67 form the SH3 domain; that stretch reads SFPTRVVALY…PKDFTEPAED (65 aa). Disordered regions lie at residues 275–648, 662–741, 762–851, and 886–1365; these read THPA…PTSL, IDPP…PPGL, AVPR…NSLN, and TPST…FSAK. The segment covering 278-296 has biased composition (polar residues); it reads AASSTMATESSHQSPSADS. The span at 300–312 shows a compositional bias: basic and acidic residues; that stretch reads ELSKSQRVAKDDD. A compositionally biased stretch (polar residues) spans 316–330; it reads VSNTANSDEPASSSK. Composition is skewed to acidic residues over residues 361 to 373 and 387 to 420; these read SEQE…DAES and SEPE…QIDP. Positions 421-433 are enriched in basic and acidic residues; it reads EEAKRIALRERMA. Positions 472-494 are enriched in low complexity; it reads STTNDSSPPKDSSSTSTQPTEQS. The span at 576 to 586 shows a compositional bias: polar residues; it reads TQETSEQQVHK. Residues 605 to 619 show a composition bias toward basic and acidic residues; the sequence is FDKETLASNEAHEAV. Residues 637-648 show a composition bias toward low complexity; sequence SSSVVTPSPTSL. 3 stretches are compositionally biased toward polar residues: residues 799–808, 886–902, and 923–940; these read SRPSTGSQLR, TPST…SNVA, and ATHQ…QLGS. 3 stretches are compositionally biased toward pro residues: residues 963–974, 1022–1053, and 1076–1241; these read PAAPPSIPPPLP, PPVP…PPVP, and IPAP…PVPA. Residues 1242-1278 show a composition bias toward low complexity; that stretch reads PSSEAPSVSTPRSSVPSPHSNASPSPTSSSMASAAPA. Phosphoserine occurs at positions 1258, 1261, and 1266. The segment covering 1300-1312 has biased composition (basic residues); it reads KSSKSGEHHHHHN. Residues 1317–1327 show a composition bias toward polar residues; the sequence is DSSSTRTSLAH. The segment covering 1340 to 1350 has biased composition (low complexity); it reads RSSSRASKKPS. Residues 1351-1362 show a composition bias toward polar residues; that stretch reads IVSTTGPFNESF. Residue serine 1379 is modified to Phosphoserine. A Phosphothreonine modification is found at threonine 1380.

The protein localises to the cytoplasm. This chain is SH3 domain-containing protein C23A1.17, found in Schizosaccharomyces pombe (strain 972 / ATCC 24843) (Fission yeast).